A 236-amino-acid chain; its full sequence is Transcription repressor MYB6 (236 aa).

HTH myb-type domains follow at residues 9–61 (KAHT…INYL) and 62–116 (RPDL…KRKL). DNA-binding regions (H-T-H motif) lie at residues 37-61 (WRSL…INYL) and 89-112 (WSLI…NTHI). Residues 159–181 (PKTENSSDNGASTSGTTTDEDLR) are disordered. A compositionally biased stretch (polar residues) spans 162-175 (ENSSDNGASTSGTT).

In terms of assembly, interacts with BHLH012/MYC1 and BHLH042/TT8. As to expression, expressed in roots, stems, flower buds, and siliques.

It is found in the nucleus. This chain is Transcription repressor MYB6 (MYB6), found in Arabidopsis thaliana (Mouse-ear cress).